We begin with the raw amino-acid sequence, 398 residues long: MEPLIELKDLEYAYPYASPALSNISLCIQRGEKIALVGSNGAGKSTLLLTLNGMIRPDKGTVTIYGKPVSYDRNSLRKIRQKIGFVFQDPDVQIIAPTVWQDVAFGPVNLDYSEEQVQQAVSNALHSVGLEGFEKRPPYHLSGGEKKRVAIAGILAMDPDVLILDEPTSMLDPAGSEDIMDLLDELNHQGKTIIISTHDVELAYPWADRIILMEKGRIIASGTPEEAFSDKELVRRARLKTPILLELSQELKSRGMKTPGTLPRTVLDIIRIIEHNHHGSIRLSDNGYGTIHVGDVDLISGSHIQAILARTSCDTIGVMGSRAKICARQWGLIPDISYAVIDKCILQAMNGRTSLILTTGGMVTRVFERVSMFNQTNNRSIPVRSLIGDEIPDDLSGI.

The ABC transporter domain maps to isoleucine 5–lysine 240. Glycine 38–serine 45 is an ATP binding site.

It belongs to the ABC transporter superfamily. Energy-coupling factor EcfA family. In terms of assembly, forms a stable energy-coupling factor (ECF) transporter complex composed of 2 membrane-embedded substrate-binding proteins (S component), 2 ATP-binding proteins (A component) and 2 transmembrane proteins (T component).

It is found in the cell membrane. Its function is as follows. ATP-binding (A) component of a common energy-coupling factor (ECF) ABC-transporter complex. Unlike classic ABC transporters this ECF transporter provides the energy necessary to transport a number of different substrates. This Methanospirillum hungatei JF-1 (strain ATCC 27890 / DSM 864 / NBRC 100397 / JF-1) protein is Energy-coupling factor transporter ATP-binding protein EcfA2.